A 941-amino-acid polypeptide reads, in one-letter code: Pre-mRNA-processing factor 6 (941 aa).

The disordered stretch occupies residues 1 to 79; the sequence is MNKKKKPFLG…DEDLNDTNYD (79 aa). Basic and acidic residues predominate over residues 39 to 65; it reads DANDPVDDRHAPPGKRTVGDQMKKNQA. A compositionally biased stretch (acidic residues) spans 66 to 78; sequence ADDDDEDLNDTNY. Ser143 bears the Phosphoserine mark. Phosphothreonine occurs at positions 180, 266, and 275. Residue Ser279 is modified to Phosphoserine. 9 HAT repeats span residues 384–416, 418–444, 445–476, 554–586, 588–620, 622–654, 689–721, 723–755, and 855–887; these read TDIRAKKRVLRKALEHVPNSVRLWKAAVELEEP, DARIMLSRAVECCPTSVELWLALARLE, TYENARKVLNKARENIPTDRHIWITAAKLEEA, NALECARAIYAYALQVFPSKKSVWLRAAYFEKN, GTRESLEALLQRAVAHCPKAEVLWLMGAKSKWL, GDVPAARSILALAFQANPNSEEIWLAAVKLESE, DNIRAAQDLCEEALRHYEDFPKLWMMKGQIEEQ, EMMEKAREAYNQGLKKCPHSTPLWLLLSRLEEK, and RKITKAREWFHRTVKIDSDLGDAWAFFYKFELQ.

Identified in the spliceosome B complex. Identified in the spliceosome C complex. Associates with the U5 snRNP particle. Component of the U4/U6-U5 tri-snRNP complex composed of the U4, U6 and U5 snRNAs and at least PRPF3, PRPF4, PRPF6, PRPF8, PRPF31, SNRNP200, TXNL4A, SNRNP40, DDX23, CD2BP2, PPIH, SNU13, EFTUD2, SART1 and USP39, LSm proteins LSm2-8 and Sm proteins. Interacts with ARAF. Interacts with AR and NR3C1, but not ESR1, independently of the presence of hormones. Interacts with USH1G. Post-translationally, phosphorylated by PRP4K during spliceosome assembly. Widely expressed.

It localises to the nucleus. The protein localises to the nucleoplasm. Its subcellular location is the nucleus speckle. Functionally, involved in pre-mRNA splicing as component of the U4/U6-U5 tri-snRNP complex, one of the building blocks of the spliceosome. Enhances dihydrotestosterone-induced transactivation activity of AR, as well as dexamethasone-induced transactivation activity of NR3C1, but does not affect estrogen-induced transactivation. In Homo sapiens (Human), this protein is Pre-mRNA-processing factor 6.